A 204-amino-acid polypeptide reads, in one-letter code: Tat proofreading chaperone DmsD (204 aa).

Belongs to the TorD/DmsD family. DmsD subfamily.

Functionally, required for biogenesis/assembly of DMSO reductase, but not for the interaction of the DmsA signal peptide with the Tat system. May be part of a chaperone cascade complex that facilitates a folding-maturation pathway for the substrate protein. The chain is Tat proofreading chaperone DmsD from Salmonella paratyphi A (strain ATCC 9150 / SARB42).